Reading from the N-terminus, the 125-residue chain is Small ribosomal subunit protein bS6 (125 aa).

The protein belongs to the bacterial ribosomal protein bS6 family.

In terms of biological role, binds together with bS18 to 16S ribosomal RNA. The protein is Small ribosomal subunit protein bS6 (rpsF) of Pasteurella multocida (strain Pm70).